Here is a 296-residue protein sequence, read N- to C-terminus: Lipoyl synthase (296 aa).

Residues cysteine 38, cysteine 43, cysteine 49, cysteine 64, cysteine 68, cysteine 71, and serine 279 each contribute to the [4Fe-4S] cluster site. The region spanning 50 to 268 (WDGGCLTFMV…AEYGRSLGFK (219 aa)) is the Radical SAM core domain.

This sequence belongs to the radical SAM superfamily. Lipoyl synthase family. [4Fe-4S] cluster serves as cofactor.

It localises to the cytoplasm. It catalyses the reaction [[Fe-S] cluster scaffold protein carrying a second [4Fe-4S](2+) cluster] + N(6)-octanoyl-L-lysyl-[protein] + 2 oxidized [2Fe-2S]-[ferredoxin] + 2 S-adenosyl-L-methionine + 4 H(+) = [[Fe-S] cluster scaffold protein] + N(6)-[(R)-dihydrolipoyl]-L-lysyl-[protein] + 4 Fe(3+) + 2 hydrogen sulfide + 2 5'-deoxyadenosine + 2 L-methionine + 2 reduced [2Fe-2S]-[ferredoxin]. Its pathway is protein modification; protein lipoylation via endogenous pathway; protein N(6)-(lipoyl)lysine from octanoyl-[acyl-carrier-protein]: step 2/2. Its function is as follows. Catalyzes the radical-mediated insertion of two sulfur atoms into the C-6 and C-8 positions of the octanoyl moiety bound to the lipoyl domains of lipoate-dependent enzymes, thereby converting the octanoylated domains into lipoylated derivatives. The sequence is that of Lipoyl synthase from Methanocella arvoryzae (strain DSM 22066 / NBRC 105507 / MRE50).